Reading from the N-terminus, the 548-residue chain is Sesquiterpene synthase 12 (548 aa).

Positions 299, 303, 444, and 452 each coordinate Mg(2+). The DDXXD motif motif lies at 299–303 (DDTFD).

This sequence belongs to the terpene synthase family. Tpsa subfamily. Mg(2+) is required as a cofactor. The cofactor is Mn(2+). In terms of tissue distribution, mostly expressed in leaves, to a lower extent in stems, trichomes, flowers and roots and, at low levels, in fruits.

It carries out the reaction (2E,6E)-farnesyl diphosphate = alpha-humulene + diphosphate. It catalyses the reaction (2E,6E)-farnesyl diphosphate = (-)-(E)-beta-caryophyllene + diphosphate. The catalysed reaction is (2Z,6Z)-farnesyl diphosphate = beta-bisabolene + diphosphate. The enzyme catalyses (2E)-geranyl diphosphate = terpinolene + diphosphate. It carries out the reaction (2E)-geranyl diphosphate = limonene + diphosphate. It catalyses the reaction (2E)-geranyl diphosphate = beta-myrcene + diphosphate. The catalysed reaction is (2E)-geranyl diphosphate = (E)-beta-ocimene + diphosphate. The enzyme catalyses (2Z,6Z)-farnesyl diphosphate = gamma-curcumene + diphosphate. It carries out the reaction (2Z,6Z)-farnesyl diphosphate = (Z)-gamma-bisabolene + diphosphate. Its pathway is secondary metabolite biosynthesis; terpenoid biosynthesis. Sesquiterpene synthase involved in the biosynthesis of volatile compounds. Mediates the conversion of (2E,6E)-farnesyl diphosphate (FPP) into (1E,4E,8E)-alpha-humulene and (-)-(E)-beta-caryophyllene, and of (2Z,6Z)-farnesyl diphosphate ((ZZ)-FPP) into beta-bisabolene, gamma-curcumene and (Z)-gamma-bisabolene. Can act with a low efficiency as a monoterpene synthase with geranyl diphosphate (GPP) as substrate, thus producing beta-myrcene, (E)-beta-ocimene, limonene and terpinolene. This chain is Sesquiterpene synthase 12, found in Solanum lycopersicum (Tomato).